A 458-amino-acid polypeptide reads, in one-letter code: MADSKSISPTDITDCFFHNLRAQVRPGDRLTVALSGGVDSVVLLHLLTTFSESMQLEVSAVHVEHGISTYSGEWSAFCQSLCDSLAIPLSIHRLKIRRRPQESLEAIAREARYQIFKHIQADYVMLAQHQDDQVETLILQLLRGAGVKGLSAMPTVRLLEPGKTIRLFRPLLNIPRSEILNYARLHGLSWVTDESNLDTSYDRNFLRHQILPLLEQRSPAYRKTLFRSTQHLGEAAHLLDELAEIDAENTLVTNRLSLQGLRKLEPARARNLLRYLLAQRLIRLPNSTKLEEILRQLNNIQPDNHFRFIVDTLEIRCHRGLIEFLPADSLPEPIAPVVWQGEQHLVIESLQGVLKFTRQNNMGIDPARLSGQIVTIRSRSGGERFQPDCKRPRRSLKKILQEAALAPWVRNTLPLLFCEDQLVWVAGIGIDCNFQISEGSTGLVVAWHPSQINQVSTH.

35-40 (SGGVDS) is a binding site for ATP.

This sequence belongs to the tRNA(Ile)-lysidine synthase family.

Its subcellular location is the cytoplasm. The enzyme catalyses cytidine(34) in tRNA(Ile2) + L-lysine + ATP = lysidine(34) in tRNA(Ile2) + AMP + diphosphate + H(+). Ligates lysine onto the cytidine present at position 34 of the AUA codon-specific tRNA(Ile) that contains the anticodon CAU, in an ATP-dependent manner. Cytidine is converted to lysidine, thus changing the amino acid specificity of the tRNA from methionine to isoleucine. The polypeptide is tRNA(Ile)-lysidine synthase (Nitrosomonas europaea (strain ATCC 19718 / CIP 103999 / KCTC 2705 / NBRC 14298)).